The following is a 258-amino-acid chain: Imidazole glycerol phosphate synthase subunit HisF (258 aa).

Catalysis depends on residues Asp11 and Asp130.

It belongs to the HisA/HisF family. Heterodimer of HisH and HisF.

It localises to the cytoplasm. The enzyme catalyses 5-[(5-phospho-1-deoxy-D-ribulos-1-ylimino)methylamino]-1-(5-phospho-beta-D-ribosyl)imidazole-4-carboxamide + L-glutamine = D-erythro-1-(imidazol-4-yl)glycerol 3-phosphate + 5-amino-1-(5-phospho-beta-D-ribosyl)imidazole-4-carboxamide + L-glutamate + H(+). It participates in amino-acid biosynthesis; L-histidine biosynthesis; L-histidine from 5-phospho-alpha-D-ribose 1-diphosphate: step 5/9. Functionally, IGPS catalyzes the conversion of PRFAR and glutamine to IGP, AICAR and glutamate. The HisF subunit catalyzes the cyclization activity that produces IGP and AICAR from PRFAR using the ammonia provided by the HisH subunit. This chain is Imidazole glycerol phosphate synthase subunit HisF, found in Azorhizobium caulinodans (strain ATCC 43989 / DSM 5975 / JCM 20966 / LMG 6465 / NBRC 14845 / NCIMB 13405 / ORS 571).